Reading from the N-terminus, the 945-residue chain is Isoleucine--tRNA ligase (945 aa).

Residues 66 to 76 (PYANGDIHLGH) carry the 'HIGH' region motif. Residue Glu-581 participates in L-isoleucyl-5'-AMP binding. The short motif at 622-626 (KMSKS) is the 'KMSKS' region element. Lys-625 contributes to the ATP binding site. 4 residues coordinate Zn(2+): Cys-908, Cys-911, Cys-928, and Cys-931.

The protein belongs to the class-I aminoacyl-tRNA synthetase family. IleS type 1 subfamily. As to quaternary structure, monomer. Requires Zn(2+) as cofactor.

It localises to the cytoplasm. It catalyses the reaction tRNA(Ile) + L-isoleucine + ATP = L-isoleucyl-tRNA(Ile) + AMP + diphosphate. Catalyzes the attachment of isoleucine to tRNA(Ile). As IleRS can inadvertently accommodate and process structurally similar amino acids such as valine, to avoid such errors it has two additional distinct tRNA(Ile)-dependent editing activities. One activity is designated as 'pretransfer' editing and involves the hydrolysis of activated Val-AMP. The other activity is designated 'posttransfer' editing and involves deacylation of mischarged Val-tRNA(Ile). In Burkholderia cenocepacia (strain HI2424), this protein is Isoleucine--tRNA ligase.